The primary structure comprises 338 residues: Ketol-acid reductoisomerase (NADP(+)) (338 aa).

The region spanning 1 to 181 (MRVFYDKDCD…GGGRTGIIET (181 aa)) is the KARI N-terminal Rossmann domain. NADP(+) contacts are provided by residues 24 to 27 (YGSQ), R47, S50, T52, and 82 to 85 (DEFQ). H107 is a catalytic residue. Residue G133 coordinates NADP(+). The KARI C-terminal knotted domain maps to 182–327 (TFKDETETDL…EKLRAMMPWI (146 aa)). Residues D190, E194, E226, and E230 each contribute to the Mg(2+) site. Position 251 (S251) interacts with substrate.

Belongs to the ketol-acid reductoisomerase family. Mg(2+) is required as a cofactor.

The enzyme catalyses (2R)-2,3-dihydroxy-3-methylbutanoate + NADP(+) = (2S)-2-acetolactate + NADPH + H(+). It catalyses the reaction (2R,3R)-2,3-dihydroxy-3-methylpentanoate + NADP(+) = (S)-2-ethyl-2-hydroxy-3-oxobutanoate + NADPH + H(+). Its pathway is amino-acid biosynthesis; L-isoleucine biosynthesis; L-isoleucine from 2-oxobutanoate: step 2/4. It functions in the pathway amino-acid biosynthesis; L-valine biosynthesis; L-valine from pyruvate: step 2/4. Its function is as follows. Involved in the biosynthesis of branched-chain amino acids (BCAA). Catalyzes an alkyl-migration followed by a ketol-acid reduction of (S)-2-acetolactate (S2AL) to yield (R)-2,3-dihydroxy-isovalerate. In the isomerase reaction, S2AL is rearranged via a Mg-dependent methyl migration to produce 3-hydroxy-3-methyl-2-ketobutyrate (HMKB). In the reductase reaction, this 2-ketoacid undergoes a metal-dependent reduction by NADPH to yield (R)-2,3-dihydroxy-isovalerate. The sequence is that of Ketol-acid reductoisomerase (NADP(+)) from Pseudomonas aeruginosa (strain LESB58).